The following is a 941-amino-acid chain: DNA mismatch repair protein MutS (941 aa).

Position 613 to 620 (613 to 620 (GPNMAGKS)) interacts with ATP.

Belongs to the DNA mismatch repair MutS family.

Its function is as follows. This protein is involved in the repair of mismatches in DNA. It is possible that it carries out the mismatch recognition step. This protein has a weak ATPase activity. The sequence is that of DNA mismatch repair protein MutS from Clostridium botulinum (strain Alaska E43 / Type E3).